A 148-amino-acid polypeptide reads, in one-letter code: Putative cyclin-dependent kinase inhibitor SPL2 (148 aa).

Residues S59 and S86 each carry the phosphoserine modification.

It localises to the cytoplasmic granule. The protein localises to the cytoplasm. Putative cyclin-dependent kinase (CDK) inhibitor necessary and sufficient for PHO pathway-dependent down-regulation of low-affinity phosphate transport. In Saccharomyces cerevisiae (strain ATCC 204508 / S288c) (Baker's yeast), this protein is Putative cyclin-dependent kinase inhibitor SPL2 (SPL2).